Here is a 489-residue protein sequence, read N- to C-terminus: Glutamyl-tRNA(Gln) amidotransferase subunit A (489 aa).

Catalysis depends on charge relay system residues lysine 79 and serine 158. Catalysis depends on serine 182, which acts as the Acyl-ester intermediate.

Belongs to the amidase family. GatA subfamily. As to quaternary structure, heterotrimer of A, B and C subunits.

It carries out the reaction L-glutamyl-tRNA(Gln) + L-glutamine + ATP + H2O = L-glutaminyl-tRNA(Gln) + L-glutamate + ADP + phosphate + H(+). Allows the formation of correctly charged Gln-tRNA(Gln) through the transamidation of misacylated Glu-tRNA(Gln) in organisms which lack glutaminyl-tRNA synthetase. The reaction takes place in the presence of glutamine and ATP through an activated gamma-phospho-Glu-tRNA(Gln). The protein is Glutamyl-tRNA(Gln) amidotransferase subunit A of Anaplasma marginale (strain Florida).